The chain runs to 385 residues: ATP phosphoribosyltransferase regulatory subunit (385 aa).

This sequence belongs to the class-II aminoacyl-tRNA synthetase family. HisZ subfamily. In terms of assembly, heteromultimer composed of HisG and HisZ subunits.

Its subcellular location is the cytoplasm. The protein operates within amino-acid biosynthesis; L-histidine biosynthesis; L-histidine from 5-phospho-alpha-D-ribose 1-diphosphate: step 1/9. Its function is as follows. Required for the first step of histidine biosynthesis. May allow the feedback regulation of ATP phosphoribosyltransferase activity by histidine. This is ATP phosphoribosyltransferase regulatory subunit from Bordetella parapertussis (strain 12822 / ATCC BAA-587 / NCTC 13253).